The primary structure comprises 213 residues: Transcription antitermination protein NusB (213 aa).

The protein belongs to the NusB family.

Involved in transcription antitermination. Required for transcription of ribosomal RNA (rRNA) genes. Binds specifically to the boxA antiterminator sequence of the ribosomal RNA (rrn) operons. This chain is Transcription antitermination protein NusB, found in Nostoc punctiforme (strain ATCC 29133 / PCC 73102).